The chain runs to 281 residues: uncharacterized protein (281 aa).

Residues 1–30 (MVQIQFHQGEPLGHKKEKPPPVSPPSPPPI) form a disordered region. The segment covering 20 to 30 (PPVSPPSPPPI) has biased composition (pro residues). 7 consecutive transmembrane segments (helical) span residues 58–78 (TVVF…LIPW), 88–107 (TLPF…AYWL), 117–137 (MLVM…GLCF), 145–165 (AYVL…LMAW), 171–191 (LAIL…IAVQ), 196–216 (YQRI…IVLI), and 248–268 (VIMF…PNYA).

The protein belongs to the cytomegalovirus US12 family.

It is found in the host membrane. This is an uncharacterized protein from Homo sapiens (Human).